The sequence spans 299 residues: CCR4-NOT transcription complex subunit 9 (299 aa).

N-acetylmethionine is present on M1.

The protein belongs to the CNOT9 family. Homodimer. Component of the CCR4-NOT complex; distinct complexes seem to exist that differ in the participation of probably mutually exclusive catalytic subunits. Interacts with MYB, ATF2, RARA, RARB, RARG, RXRA, RXRB and RXRG. Identified in a complex with ATF2 bound to target DNA. Interacts with NANOS2. Directly interacts with ZNF335. Detected in spleen, thymus, prostate, testis, ovary and intestine.

Its subcellular location is the nucleus. It is found in the cytoplasm. It localises to the P-body. Functionally, component of the CCR4-NOT complex which is one of the major cellular mRNA deadenylases and is linked to various cellular processes including bulk mRNA degradation, miRNA-mediated repression, translational repression during translational initiation and general transcription regulation. Additional complex functions may be a consequence of its influence on mRNA expression. Involved in down-regulation of MYB- and JUN-dependent transcription. May play a role in cell differentiation. Can bind oligonucleotides, such as poly-G, poly-C or poly-T (in vitro), but the physiological relevance of this is not certain. Does not bind poly-A. Enhances ligand-dependent transcriptional activity of nuclear hormone receptors, including RARA, expect ESR1-mediated transcription that is not only slightly increased, if at all. This chain is CCR4-NOT transcription complex subunit 9, found in Homo sapiens (Human).